The sequence spans 136 residues: Small ribosomal subunit protein uS9 (136 aa).

A disordered region spans residues 97 to 136 (SPDNRKPLKTEGHLSRDPRAKERRKYGLKKARKAPQFSKR). The segment covering 98 to 116 (PDNRKPLKTEGHLSRDPRA) has biased composition (basic and acidic residues). A compositionally biased stretch (basic residues) spans 117–136 (KERRKYGLKKARKAPQFSKR).

It belongs to the universal ribosomal protein uS9 family.

The sequence is that of Small ribosomal subunit protein uS9 from Prochlorococcus marinus (strain MIT 9215).